A 154-amino-acid polypeptide reads, in one-letter code: Small ribosomal subunit protein bS6 (154 aa).

The interval 107–154 is disordered; that stretch reads KSDDRERGFRGPKPPGRFESGRKRGYDDREEFRARAGGDDDDRGLDQE. Residues 125 to 154 are compositionally biased toward basic and acidic residues; that stretch reads ESGRKRGYDDREEFRARAGGDDDDRGLDQE.

It belongs to the bacterial ribosomal protein bS6 family.

Binds together with bS18 to 16S ribosomal RNA. In Granulibacter bethesdensis (strain ATCC BAA-1260 / CGDNIH1), this protein is Small ribosomal subunit protein bS6.